The chain runs to 409 residues: POU domain, class 4, transcription factor 2 (409 aa).

A disordered region spans residues 26-93; it reads YSALHSTSPG…SEAMRRACLP (68 aa). Low complexity predominate over residues 31-52; it reads STSPGSSAPIAPSASSPSSSSN. Over residues 53 to 69 the composition is skewed to gly residues; the sequence is AGGGGGGGGGGGGGGGR. The required for transcriptional activation stretch occupies residues 91–237; that stretch reads CLPTPPSNIF…MHQAALSMAH (147 aa). The POU-IV box signature appears at 110-119; that stretch reads RAEALAAVDI. Positions 153-166 are enriched in low complexity; that stretch reads AASSSSVPISHPSA. The disordered stretch occupies residues 153 to 188; sequence AASSSSVPISHPSALAGTHHHHHHHHHHHHQPHQAL. The segment covering 170–184 has biased composition (basic residues); the sequence is THHHHHHHHHHHHQP. The Nuclear speckle targeting signal signature appears at 171 to 185; it reads HHHHHHHHHHHHQPH. Residues 238-409 form a required for DNA-binding and transcriptional repression region; sequence AHGLPSHMGC…QKRMKYSAGI (172 aa). A POU-specific domain is found at 250-327; that stretch reads DVDADPRDLE…ILQAWLEEAE (78 aa). The segment at residues 345-404 is a DNA-binding region (homeobox); sequence KKRKRTSIAAPEKRSLEAYFAIQPRPSSEKIAAIAEKLDLKKNVVRVWFCNQRQKQKRMK.

Belongs to the POU transcription factor family. Class-4 subfamily. Interacts with POU4F1; this interaction inhibits both POU4F1 DNA-binding and transcriptional activities. Interacts (C-terminus) with ESR1 (via DNA-binding domain); this interaction increases the estrogen receptor ESR1 transcriptional activity in a DNA- and ligand 17-beta-estradiol-independent manner. Interacts (via C-terminus) with TP53 (via N-terminus). Interacts with DLX1 (via homeobox DNA-binding domain); this interaction suppresses DLX1-mediated transcriptional activity in postnatal retina enhancing retinal ganglion cell (RGC) differentiation. Interacts with DLX2 (via homeobox DNA-binding domain); this interaction enhances RGC differentiation. Interacts (via C-terminus) with ISL1 (via C-terminus). Interacts with ISL2. Interacts with LHX2. Expressed in the brain. Expressed in the ganglion cell layer of the retina.

The protein resides in the nucleus. Its subcellular location is the nucleus speckle. It localises to the cytoplasm. In terms of biological role, tissue-specific DNA-binding transcription factor involved in the development and differentiation of target cells. Functions either as activator or repressor modulating the rate of target gene transcription through RNA polymerase II enzyme in a promoter-dependent manner. Binds to the consensus octamer motif 5'-AT[A/T]A[T/A]T[A/T]A-3' of promoter of target genes. Plays a fundamental role in the gene regulatory network essential for retinal ganglion cell (RGC) differentiation. Binds to an octamer site to form a ternary complex with ISL1; cooperates positively with ISL1 and ISL2 to potentiate transcriptional activation of RGC target genes being involved in RGC fate commitment in the developing retina and RGC axon formation and pathfinding. Inhibits DLX1 and DLX2 transcriptional activities preventing DLX1- and DLX2-mediated ability to promote amacrine cell fate specification. In cooperation with TP53 potentiates transcriptional activation of BAX promoter activity increasing neuronal cell apoptosis. Negatively regulates BAX promoter activity in the absence of TP53. Acts as a transcriptional coactivator via its interaction with the transcription factor ESR1 by enhancing its effect on estrogen response element (ERE)-containing promoter. Antagonizes the transcriptional stimulatory activity of POU4F1 by preventing its binding to an octamer motif. Involved in TNFSF11-mediated terminal osteoclast differentiation. This is POU domain, class 4, transcription factor 2 from Homo sapiens (Human).